The following is a 262-amino-acid chain: Ornithine carbamoyltransferase (262 aa).

Carbamoyl phosphate contacts are provided by residues 3–7, Gln30, Arg54, and 81–84; these read STRTR and HPTQ. Residues Asn114, Asp178, and 182 to 183 contribute to the L-ornithine site; that span reads SM. Residues 219-222 and Thr247 each bind carbamoyl phosphate; that span reads HCLP.

Belongs to the aspartate/ornithine carbamoyltransferase superfamily. OTCase family.

It localises to the cytoplasm. It carries out the reaction carbamoyl phosphate + L-ornithine = L-citrulline + phosphate + H(+). The protein operates within amino-acid biosynthesis; L-arginine biosynthesis; L-arginine from L-ornithine and carbamoyl phosphate: step 1/3. This chain is Ornithine carbamoyltransferase (argF), found in Neisseria cinerea.